Consider the following 351-residue polypeptide: MTVTIKLGQLAEFLGATLSGDPEKQITGLATLQEAGPAQLSFLANPQYRKYLAGTQAAALLLKAADAEGYAGNALVVPDPYLAYARISHLFDPKPKATAGIHPTAVIAEDAVVDPSASVGPFVVIEAGARIGADVTLGAHCVVGARSEIGEGGWLAPRVTLYHDVRIGKRVVIQSGAVLGGEGFGFANEKGVWQKIAQIGGVTIGDDVEIGVNTAIDRGALADTVIGNGVKLDNQIQIAHNVQVGDHTAMAACVGISGSTKIGKHCMLAGGVGLVGHIDICDNVFLTGMTMVTHSITEPGAYSSGTAMQPAAEWRKSAARIRQLDDIARRLKQLEKRSGEVTPDGNASSEG.

The active-site Proton acceptor is His240.

The protein belongs to the transferase hexapeptide repeat family. LpxD subfamily. In terms of assembly, homotrimer.

The enzyme catalyses a UDP-3-O-[(3R)-3-hydroxyacyl]-alpha-D-glucosamine + a (3R)-hydroxyacyl-[ACP] = a UDP-2-N,3-O-bis[(3R)-3-hydroxyacyl]-alpha-D-glucosamine + holo-[ACP] + H(+). It participates in bacterial outer membrane biogenesis; LPS lipid A biosynthesis. Its function is as follows. Catalyzes the N-acylation of UDP-3-O-acylglucosamine using 3-hydroxyacyl-ACP as the acyl donor. Is involved in the biosynthesis of lipid A, a phosphorylated glycolipid that anchors the lipopolysaccharide to the outer membrane of the cell. The polypeptide is UDP-3-O-acylglucosamine N-acyltransferase (Pseudomonas fluorescens (strain Pf0-1)).